Reading from the N-terminus, the 348-residue chain is Centromere protein N (348 aa).

The protein belongs to the CENP-N/CHL4 family.

Its subcellular location is the nucleus. The protein resides in the chromosome. It is found in the centromere. Probable component of a centromeric complex involved in assembly of kinetochore proteins, mitotic progression and chromosome segregation. The sequence is that of Centromere protein N (cenpn) from Xenopus tropicalis (Western clawed frog).